Reading from the N-terminus, the 328-residue chain is Apoptosis facilitator Bcl-2-like protein 14 (328 aa).

At Ser-44 the chain carries Phosphoserine. A BH3 motif is present at residues Ile-213–Glu-227. Residues Trp-309–Trp-316 carry the BH2 motif.

This sequence belongs to the Bcl-2 family. In terms of processing, phosphorylated by MELK, leading to inhibit its pro-apoptotic function.

It is found in the cytoplasm. Functionally, plays a role in apoptosis. This is Apoptosis facilitator Bcl-2-like protein 14 (Bcl2l14) from Mus musculus (Mouse).